Reading from the N-terminus, the 950-residue chain is UvrABC system protein A (950 aa).

36–43 (GKSGSGKS) contributes to the ATP binding site. The C4-type zinc-finger motif lies at 260 to 287 (CPLCGFSLPLIEPRLFSFNSPFGACSEC). 2 consecutive ABC transporter domains span residues 317–599 (FKTS…KNSL) and 619–947 (ADKG…MFLK). Position 651 to 658 (651 to 658 (GVSGSGKS)) interacts with ATP. Residues 750-776 (CEKCQGDGYLNIQMHFLPDVFVPCDLC) form a C4-type zinc finger.

This sequence belongs to the ABC transporter superfamily. UvrA family. In terms of assembly, forms a heterotetramer with UvrB during the search for lesions.

The protein resides in the cytoplasm. In terms of biological role, the UvrABC repair system catalyzes the recognition and processing of DNA lesions. UvrA is an ATPase and a DNA-binding protein. A damage recognition complex composed of 2 UvrA and 2 UvrB subunits scans DNA for abnormalities. When the presence of a lesion has been verified by UvrB, the UvrA molecules dissociate. The chain is UvrABC system protein A from Borreliella burgdorferi (strain ATCC 35210 / DSM 4680 / CIP 102532 / B31) (Borrelia burgdorferi).